We begin with the raw amino-acid sequence, 218 residues long: UPF0319 protein PM0395 (218 aa).

An N-terminal signal peptide occupies residues 1–21 (MKFRFAALASVALLTSTVSVA).

The protein belongs to the UPF0319 family.

In Pasteurella multocida (strain Pm70), this protein is UPF0319 protein PM0395.